The following is a 1109-amino-acid chain: Carbamoyl phosphate synthase large chain (1109 aa).

The carboxyphosphate synthetic domain stretch occupies residues 1–402; the sequence is MPRRTDLTSV…ALQKAMRSID (402 aa). 12 residues coordinate ATP: Arg-129, Arg-169, Gly-175, Gly-176, Glu-208, Ile-210, Glu-215, Gly-241, Val-242, His-243, Gln-285, and Glu-299. Residues 133-328 enclose the ATP-grasp 1 domain; that stretch reads KGVVERCGAE…IAKIAARLAV (196 aa). Residues Gln-285, Glu-299, and Asn-301 each contribute to the Mg(2+) site. Positions 285, 299, and 301 each coordinate Mn(2+). The oligomerization domain stretch occupies residues 403–548; it reads KAGSTFHWRG…YHYSSYDAET (146 aa). Residues 549 to 956 form a carbamoyl phosphate synthetic domain region; that stretch reads EVQPRDRPAV…AFAKSQAAAY (408 aa). Positions 678–876 constitute an ATP-grasp 2 domain; the sequence is GEVLVAAGLP…LAKAASLLMA (199 aa). ATP contacts are provided by Arg-714, Arg-760, Leu-762, Glu-767, Gly-792, Ile-793, His-794, Ser-795, Gln-835, and Glu-847. Residues Gln-835, Glu-847, and Asn-849 each coordinate Mg(2+). Positions 835, 847, and 849 each coordinate Mn(2+). One can recognise an MGS-like domain in the interval 957–1102; sequence GGLPTSGRVF…QEHDAARAAR (146 aa). Positions 957–1109 are allosteric domain; sequence GGLPTSGRVF…AARETEGVHA (153 aa).

The protein belongs to the CarB family. As to quaternary structure, composed of two chains; the small (or glutamine) chain promotes the hydrolysis of glutamine to ammonia, which is used by the large (or ammonia) chain to synthesize carbamoyl phosphate. Tetramer of heterodimers (alpha,beta)4. Mg(2+) is required as a cofactor. Requires Mn(2+) as cofactor.

The enzyme catalyses hydrogencarbonate + L-glutamine + 2 ATP + H2O = carbamoyl phosphate + L-glutamate + 2 ADP + phosphate + 2 H(+). The catalysed reaction is hydrogencarbonate + NH4(+) + 2 ATP = carbamoyl phosphate + 2 ADP + phosphate + 2 H(+). The protein operates within amino-acid biosynthesis; L-arginine biosynthesis; carbamoyl phosphate from bicarbonate: step 1/1. Its pathway is pyrimidine metabolism; UMP biosynthesis via de novo pathway; (S)-dihydroorotate from bicarbonate: step 1/3. In terms of biological role, large subunit of the glutamine-dependent carbamoyl phosphate synthetase (CPSase). CPSase catalyzes the formation of carbamoyl phosphate from the ammonia moiety of glutamine, carbonate, and phosphate donated by ATP, constituting the first step of 2 biosynthetic pathways, one leading to arginine and/or urea and the other to pyrimidine nucleotides. The large subunit (synthetase) binds the substrates ammonia (free or transferred from glutamine from the small subunit), hydrogencarbonate and ATP and carries out an ATP-coupled ligase reaction, activating hydrogencarbonate by forming carboxy phosphate which reacts with ammonia to form carbamoyl phosphate. In Beutenbergia cavernae (strain ATCC BAA-8 / DSM 12333 / CCUG 43141 / JCM 11478 / NBRC 16432 / NCIMB 13614 / HKI 0122), this protein is Carbamoyl phosphate synthase large chain.